A 264-amino-acid polypeptide reads, in one-letter code: ATP synthase subunit a (264 aa).

A run of 7 helical transmembrane segments spans residues 41-61 (ITNI…INLL), 99-119 (IYFP…LIGM), 129-149 (HFVL…ILGF), 156-176 (FFSL…LVLI), 194-214 (ANIL…YNIM), 217-237 (GIIF…FSGL), and 238-258 (ELGI…GYIK).

The protein belongs to the ATPase A chain family. As to quaternary structure, F-type ATPases have 2 components, CF(1) - the catalytic core - and CF(0) - the membrane proton channel. CF(1) has five subunits: alpha(3), beta(3), gamma(1), delta(1), epsilon(1). CF(0) has three main subunits: a, b and c.

Its subcellular location is the mitochondrion inner membrane. Its function is as follows. Mitochondrial membrane ATP synthase (F(1)F(0) ATP synthase or Complex V) produces ATP from ADP in the presence of a proton gradient across the membrane which is generated by electron transport complexes of the respiratory chain. F-type ATPases consist of two structural domains, F(1) - containing the extramembraneous catalytic core and F(0) - containing the membrane proton channel, linked together by a central stalk and a peripheral stalk. During catalysis, ATP synthesis in the catalytic domain of F(1) is coupled via a rotary mechanism of the central stalk subunits to proton translocation. Key component of the proton channel; it may play a direct role in the translocation of protons across the membrane. In Podospora anserina (strain S / ATCC MYA-4624 / DSM 980 / FGSC 10383) (Pleurage anserina), this protein is ATP synthase subunit a (ATP6).